Reading from the N-terminus, the 2347-residue chain is Proto-oncogene tyrosine-protein kinase ROS (2347 aa).

Positions 1–27 (MKNIYCLIPKLVNFATLGCLWISVVQC) are cleaved as a signal peptide. At 28–1859 (TVLNSCLKSC…LVGDDFWIPE (1832 aa)) the chain is on the extracellular side. N-linked (GlcNAc...) asparagine glycosylation is found at Asn-52, Asn-114, and Asn-123. Fibronectin type-III domains lie at 101–196 (LPTA…VPET) and 197–285 (APLI…SSSA). N-linked (GlcNAc...) asparagine glycosylation is found at Asn-324, Asn-352, Asn-396, Asn-471, Asn-607, Asn-628, Asn-706, Asn-714, Asn-732, Asn-939, Asn-961, Asn-1015, Asn-1087, Asn-1090, Asn-1095, Asn-1211, Asn-1272, Asn-1330, Asn-1458, Asn-1461, Asn-1474, Asn-1499, Asn-1565, Asn-1669, Asn-1715, Asn-1738, and Asn-1808. Residues 557–671 (LPGRPQELSV…EPSVGTTLVP (115 aa)) enclose the Fibronectin type-III 3 domain. 2 consecutive Fibronectin type-III domains span residues 947-1042 (IPDS…TVPS) and 1043-1150 (APEN…TSEI). Fibronectin type-III domains follow at residues 1450-1556 (DTVE…TKNG), 1557-1656 (VPEA…VEMF), 1658-1751 (TPEK…TKAG), and 1752-1854 (VPNK…VGDD). The chain crosses the membrane as a helical span at residues 1860-1882 (TSFILTIIVGIFLVVTIPLTFVW). At 1883 to 2347 (HRRLKNQKSA…THSGYGDGSD (465 aa)) the chain is on the cytoplasmic side. A Protein kinase domain is found at 1945–2222 (LTLRLLLGSG…DQLQLFRNFF (278 aa)). ATP contacts are provided by residues 1951–1959 (LGSGAFGEV) and Lys-1980. Asp-2079 serves as the catalytic Proton acceptor. Tyr-2274 is subject to Phosphotyrosine; by autocatalysis. Residues 2284–2311 (GEEKSEGPLGSQESESCGLRKEEKEPHA) are disordered. Residues 2301-2311 (GLRKEEKEPHA) are compositionally biased toward basic and acidic residues. The residue at position 2334 (Tyr-2334) is a Phosphotyrosine; by autocatalysis.

It belongs to the protein kinase superfamily. Tyr protein kinase family. Insulin receptor subfamily. In terms of assembly, interacts with PTPN6 (via SH2 1 domain); the interaction is direct and promotes ROS1 dephosphorylation. Interacts with PTPN11; may activate the PI3 kinase-mTOR signaling pathway. Interacts with VAV3; constitutive interaction mediating VAV3 phosphorylation. Post-translationally, phosphorylated. Probably autophosphorylates. Phosphorylation at Tyr-2274 is required for the interaction with PTPN6 that mediates ROS1 dephosphorylation. Phosphorylation at Tyr-2274 stimulates the kinase activity and the activation of the ERK1 signaling cascade. Phosphorylation at Tyr-2274 and/or Tyr-2334 recruits PTPN11. In terms of tissue distribution, expressed in brain. Expression is increased in primary gliomas.

The protein resides in the cell membrane. The enzyme catalyses L-tyrosyl-[protein] + ATP = O-phospho-L-tyrosyl-[protein] + ADP + H(+). Inhibited by dephosphorylation by PTPN6. Functionally, receptor tyrosine kinase (RTK) that plays a role in epithelial cell differentiation and regionalization of the proximal epididymal epithelium. NELL2 is an endogenous ligand for ROS1. Upon endogenous stimulation by NELL2, ROS1 activates the intracellular signaling pathway and triggers epididymal epithelial differentiation and subsequent sperm maturation. May activate several downstream signaling pathways related to cell differentiation, proliferation, growth and survival including the PI3 kinase-mTOR signaling pathway. Mediates the phosphorylation of PTPN11, an activator of this pathway. May also phosphorylate and activate the transcription factor STAT3 to control anchorage-independent cell growth. Mediates the phosphorylation and the activation of VAV3, a guanine nucleotide exchange factor regulating cell morphology. May activate other downstream signaling proteins including AKT1, MAPK1, MAPK3, IRS1 and PLCG2. This Homo sapiens (Human) protein is Proto-oncogene tyrosine-protein kinase ROS (ROS1).